Reading from the N-terminus, the 266-residue chain is DNA repair protein RecO (266 aa).

It belongs to the RecO family.

Its function is as follows. Involved in DNA repair and RecF pathway recombination. This chain is DNA repair protein RecO, found in Synechococcus elongatus (strain ATCC 33912 / PCC 7942 / FACHB-805) (Anacystis nidulans R2).